Consider the following 240-residue polypeptide: Putative tyrosine phosphatase 067L (240 aa).

In terms of domain architecture, Tyrosine-protein phosphatase spans 3–151; sequence QASFFVADKA…EREWPLNPTQ (149 aa). Cys96 (phosphocysteine intermediate) is an active-site residue.

The protein belongs to the protein-tyrosine phosphatase family.

The enzyme catalyses O-phospho-L-tyrosyl-[protein] + H2O = L-tyrosyl-[protein] + phosphate. The protein is Putative tyrosine phosphatase 067L of Aedes vexans (Inland floodwater mosquito).